Consider the following 205-residue polypeptide: Large ribosomal subunit protein bL9 (205 aa).

The interval 160-205 (RDRKSRNAAAASEVQDAPVEDGGDEVVSVDSVAAEDGGADASGGTA) is disordered. Over residues 184-195 (EVVSVDSVAAED) the composition is skewed to low complexity.

This sequence belongs to the bacterial ribosomal protein bL9 family.

In terms of biological role, binds to the 23S rRNA. The protein is Large ribosomal subunit protein bL9 of Anaplasma phagocytophilum (strain HZ).